The sequence spans 289 residues: Ketose 3-epimerase (289 aa).

E146 acts as the Proton donor/acceptor in catalysis. E146 is a binding site for Mn(2+). Residues E152 and D179–H182 each bind substrate. Residues D179 and H205 each coordinate Mn(2+). R211 is a binding site for substrate. Residue E240 is the Proton donor/acceptor of the active site. A Mn(2+)-binding site is contributed by E240.

It belongs to the hyi family. Homotetramer. Mg(2+) serves as cofactor. It depends on Mn(2+) as a cofactor. The cofactor is Co(2+).

It catalyses the reaction L-ribulose = L-xylulose. The enzyme catalyses D-allulose = keto-D-fructose. It carries out the reaction keto-L-tagatose = keto-L-sorbose. The catalysed reaction is D-ribulose = D-xylulose. It catalyses the reaction L-allulose = keto-L-fructose. The enzyme catalyses keto-D-tagatose = keto-D-sorbose. Functionally, catalyzes the reversible C-3 epimerization of several ketoses. Shows the highest enzymatic activity for the epimerization of L-ribulose to L-xylulose. Is also able to convert D-allulose (also known as D-psicose) to D-fructose and, to a lesser extent, L-tagatose to L-sorbose, D-ribulose to D-xylulose, L-allulose to L-fructose and D-tagatose to D-sorbose. This Arthrobacter globiformis protein is Ketose 3-epimerase.